Here is a 241-residue protein sequence, read N- to C-terminus: UPF0280 protein MK0206 (241 aa).

The protein belongs to the UPF0280 family.

This Methanopyrus kandleri (strain AV19 / DSM 6324 / JCM 9639 / NBRC 100938) protein is UPF0280 protein MK0206.